A 311-amino-acid polypeptide reads, in one-letter code: Aspartate carbamoyltransferase catalytic subunit (311 aa).

Carbamoyl phosphate contacts are provided by Arg-55 and Thr-56. Lys-85 serves as a coordination point for L-aspartate. Carbamoyl phosphate is bound by residues Arg-106, His-135, and Gln-138. L-aspartate contacts are provided by Arg-168 and Arg-230. Carbamoyl phosphate contacts are provided by Leu-268 and Pro-269.

It belongs to the aspartate/ornithine carbamoyltransferase superfamily. ATCase family. In terms of assembly, heterododecamer (2C3:3R2) of six catalytic PyrB chains organized as two trimers (C3), and six regulatory PyrI chains organized as three dimers (R2).

It carries out the reaction carbamoyl phosphate + L-aspartate = N-carbamoyl-L-aspartate + phosphate + H(+). The protein operates within pyrimidine metabolism; UMP biosynthesis via de novo pathway; (S)-dihydroorotate from bicarbonate: step 2/3. Its function is as follows. Catalyzes the condensation of carbamoyl phosphate and aspartate to form carbamoyl aspartate and inorganic phosphate, the committed step in the de novo pyrimidine nucleotide biosynthesis pathway. The protein is Aspartate carbamoyltransferase catalytic subunit of Escherichia coli (strain 55989 / EAEC).